The primary structure comprises 538 residues: Putative amidase kk1C (538 aa).

Residues Met1–His32 form a disordered region. Active-site charge relay system residues include Lys134 and Ser209. Ser233 functions as the Acyl-ester intermediate in the catalytic mechanism.

It belongs to the amidase family.

It catalyses the reaction a monocarboxylic acid amide + H2O = a monocarboxylate + NH4(+). The protein operates within secondary metabolite biosynthesis. In terms of biological role, putative amidase; part of the gene cluster that mediates the biosynthesis of KK-1, a novel cyclic depsipeptide with 10 residues which is a promising active compound with high activity against many plant pathogens, especially Botrytis cinerea. The role of kk1C in KK-1 biosynthesis has still to be determined. The nonribosomal peptide synthetase (NRPS) kk1B catalyzes the elongation and cyclization of the decapeptide chain composed of 1 D-lactic acid residue (D-Lac), 1 pipecolic acid residue (Pip), 1 aspartic acid residue (Asp), 1 isoleucine residue (Ile), 1 glycine residue (Gly), 1 tyrosine residue (Tyr) and 4 valine residues (Val). The Asp, Ile and 3 Val residues are N-methylated by the 5 methyltransferase domains from the NRPS (found in modules 3, 5, 6, 7 and 9), whereas the Tyr residue is O-methylated by the cluster encoded O-methyltransferase kk1A. The thioesterase kk1J is likely to be involved in the corrective mechanism of peptide chain synthesis. The D-lactate dehydrogenase kk1H is involved in the synthesis of D-lactic acid from pyruvic acid, which is recognized by the A domain of the first kk1B module. The pyrroline-5-carboxylate reductase kk1I is involved in the synthesis of the L-pipecolic acid residue of KK-1 from delta-1-pyrroline-5-carboxylate (P5C), a metabolic intermediate of lysine. It is still unclear how kk1C and kk1D are involved in the production of KK-1. This chain is Putative amidase kk1C, found in Curvularia clavata.